Reading from the N-terminus, the 325-residue chain is Thiamine-monophosphate kinase (325 aa).

Residues aspartate 30, serine 45, threonine 46, and aspartate 47 each contribute to the Mg(2+) site. Residue histidine 54 participates in substrate binding. Mg(2+)-binding residues include aspartate 75 and aspartate 122. ATP is bound by residues 121 to 122 (GD) and arginine 146. Aspartate 212 contributes to the Mg(2+) binding site. Serine 214 serves as a coordination point for ATP. Position 215 (aspartate 215) interacts with Mg(2+). Substrate contacts are provided by glutamate 263 and tyrosine 319.

It belongs to the thiamine-monophosphate kinase family.

The catalysed reaction is thiamine phosphate + ATP = thiamine diphosphate + ADP. It participates in cofactor biosynthesis; thiamine diphosphate biosynthesis; thiamine diphosphate from thiamine phosphate: step 1/1. Its function is as follows. Catalyzes the ATP-dependent phosphorylation of thiamine-monophosphate (TMP) to form thiamine-pyrophosphate (TPP), the active form of vitamin B1. This is Thiamine-monophosphate kinase (thiL) from Salmonella typhimurium (strain LT2 / SGSC1412 / ATCC 700720).